The primary structure comprises 390 residues: Chorismate synthase 1 (390 aa).

NADP(+)-binding residues include Arg-39 and Arg-45. A disordered region spans residues 95 to 117 (EQEEKEMKRKVTKPRPGHADLNG). FMN-binding positions include 132-134 (RSS), 253-254 (NA), Gly-298, 313-317 (KPIPT), and Arg-339.

Belongs to the chorismate synthase family. In terms of assembly, homotetramer. FMNH2 serves as cofactor.

The enzyme catalyses 5-O-(1-carboxyvinyl)-3-phosphoshikimate = chorismate + phosphate. The protein operates within metabolic intermediate biosynthesis; chorismate biosynthesis; chorismate from D-erythrose 4-phosphate and phosphoenolpyruvate: step 7/7. Catalyzes the anti-1,4-elimination of the C-3 phosphate and the C-6 proR hydrogen from 5-enolpyruvylshikimate-3-phosphate (EPSP) to yield chorismate, which is the branch point compound that serves as the starting substrate for the three terminal pathways of aromatic amino acid biosynthesis. This reaction introduces a second double bond into the aromatic ring system. The protein is Chorismate synthase 1 of Bacillus cereus (strain ZK / E33L).